The chain runs to 1094 residues: AP-3 complex subunit beta-1 (1094 aa).

Residues methionine 1–glutamine 11 show a composition bias toward polar residues. Disordered stretches follow at residues methionine 1–serine 31 and aspartate 268–threonine 292. Serine 276 and serine 609 each carry phosphoserine. The interval proline 662 to proline 811 is disordered. A compositionally biased stretch (basic and acidic residues) spans alanine 666–serine 677. Composition is skewed to acidic residues over residues glutamate 678 to serine 696 and glutamate 705 to serine 726. Composition is skewed to basic and acidic residues over residues glutamate 727–arginine 738 and glycine 748–threonine 764. Phosphoserine is present on residues serine 750 and serine 752. Residues serine 765–aspartate 777 show a composition bias toward low complexity. Residues serine 778–glutamate 791 show a composition bias toward acidic residues. The span at serine 792–proline 811 shows a compositional bias: basic and acidic residues.

It belongs to the adaptor complexes large subunit family. Adaptor protein complex 3 (AP-3) is a heterotetramer composed of two large adaptins (delta-type subunit AP3D1 and beta-type subunit AP3B1 or AP3B2), a medium adaptin (mu-type subunit AP3M1 or AP3M2) and a small adaptin (sigma-type subunit APS1 or AP3S2). AP-3 associates with the BLOC-1 complex. Interacts with KIF3A; interaction is direct; interaction is impaired by pyrophosphorylation of AP3B1. Phosphorylated on serine residues. In terms of processing, pyrophosphorylation by 5-diphosphoinositol pentakisphosphate (5-IP7) impairs interaction with KIF3A. Serine pyrophosphorylation is achieved by Mg(2+)-dependent, but enzyme independent transfer of a beta-phosphate from a inositol pyrophosphate to a pre-phosphorylated serine residue. Ubiquitously expressed.

It localises to the cytoplasmic vesicle. The protein resides in the clathrin-coated vesicle membrane. It is found in the golgi apparatus. Subunit of non-clathrin- and clathrin-associated adaptor protein complex 3 (AP-3) that plays a role in protein sorting in the late-Golgi/trans-Golgi network (TGN) and/or endosomes. The AP complexes mediate both the recruitment of clathrin to membranes and the recognition of sorting signals within the cytosolic tails of transmembrane cargo molecules. AP-3 appears to be involved in the sorting of a subset of transmembrane proteins targeted to lysosomes and lysosome-related organelles. In concert with the BLOC-1 complex, AP-3 is required to target cargos into vesicles assembled at cell bodies for delivery into neurites and nerve terminals. This is AP-3 complex subunit beta-1 (AP3B1) from Homo sapiens (Human).